A 318-amino-acid chain; its full sequence is Cell surface sensor SHO1 (318 aa).

The interval 1 to 23 (MPSYGSLHSPSLRKMEHSRGQYG) is disordered. The Cytoplasmic segment spans residues 1–38 (MPSYGSLHSPSLRKMEHSRGQYGGGRKGMSLGNVIGDP). A helical membrane pass occupies residues 39 to 59 (FALATISIAGLAWLIAFIASI). The Extracellular portion of the chain corresponds to 60–71 (VAQIQTTQGFPT). A helical transmembrane segment spans residues 72–92 (YTWWTVVFYFFLIPGVFVVVA). Residues 93-100 (SDTIQTYH) lie on the Cytoplasmic side of the membrane. A helical transmembrane segment spans residues 101-121 (VALVGYMACGLVLTTSSVNGL). Topologically, residues 122 to 130 (VYSTNGAKE) are extracellular. Residues 131–151 (AAAAGFILLSMVTIVWIFYFG) form a helical membrane-spanning segment. Topologically, residues 152–318 (SAPSAMPRAY…IAPSNYLILL (167 aa)) are cytoplasmic. Residues 172–255 (TSNNRQTMTG…AGGAADAEIV (84 aa)) form a disordered region. Polar residues predominate over residues 190 to 214 (ETSTSVQPPQMYTSAQLNGFENPSP). Over residues 237-250 (GLPKTTTPPAGGAA) the composition is skewed to low complexity. The region spanning 259–318 (EYPYRAKAIYTYEANPDDANEISFSKHEILEVSDVSGRWWQARKETGETGIAPSNYLILL) is the SH3 domain.

It belongs to the SHO1 family. Forms homooligomers.

The protein localises to the cell membrane. In terms of biological role, MSB2 and SHO1 have overlapping functions in recognizing various surface signals for MAPK PMK1 activation and appressorium formation. While MSB2 is critical for sensing surface hydrophobicity and cutin monomers, SHO1 may play a more important role in recognizing rice leaf waxes. This Pyricularia oryzae (strain 70-15 / ATCC MYA-4617 / FGSC 8958) (Rice blast fungus) protein is Cell surface sensor SHO1.